Consider the following 441-residue polypeptide: POC1 centriolar protein homolog A (441 aa).

7 WD repeats span residues 16 to 55 (GHRD…RAYR), 58 to 97 (GHKD…ESTA), 100 to 139 (AHTG…FLFS), 142 to 181 (QHIN…CIQS), 184 to 223 (EHGG…LIQH), 226 to 265 (VHSG…LLYT), and 268 to 307 (GHQG…GSYP). The interval 347–376 (DLEPHITEMSVKDRSSPLSYTSRSVDQHHP) is disordered. Residues 348 to 361 (LEPHITEMSVKDRS) show a composition bias toward basic and acidic residues. A coiled-coil region spans residues 400-427 (LTRTVGILEQRLSLTEDKLKECIEQQQA).

It belongs to the WD repeat POC1 family. Interacts with pat.

It is found in the cytoplasm. It localises to the cytoskeleton. May play an important role in centriole assembly and/or stability and ciliogenesis. The protein is POC1 centriolar protein homolog A (poc1a) of Xenopus laevis (African clawed frog).